The chain runs to 61 residues: Large ribosomal subunit protein bL28 (61 aa).

Residues 1–21 (MAKDYVTGKKTTFGNKRSHAM) form a disordered region.

It belongs to the bacterial ribosomal protein bL28 family.

This Lactobacillus helveticus (strain DPC 4571) protein is Large ribosomal subunit protein bL28.